A 319-amino-acid chain; its full sequence is MTQLDQLKQFTTVVADTGDFQAMRAYAPHDATTNPSLILKAVQKAEYRPLLEQAVRDARSDSVEDIIDAVLVAFGCEILSIIPGRVSTEVDARLSFDTAATVAKARHLIALYEARGVPRERVLIKIASTWEGIRAADQLRAEGIRCNMTLLFSLIQAVACAEAGVQLISPFVGRIYDWYKKDAGAAWDPIAQGGANDPGVQSVVRIYNYYKRFGYTTEVMGASFRNTSQIIELAGCDLLTISPELLAQLQQSDAPVERKLSPEHAHATNLVRLPADEAAFRWHMNADAMATEKLAEGIRLFAADAVKLEGLIGPLRAAA.

Lys-125 (schiff-base intermediate with substrate) is an active-site residue.

The protein belongs to the transaldolase family. Type 1 subfamily. In terms of assembly, homodimer.

Its subcellular location is the cytoplasm. It catalyses the reaction D-sedoheptulose 7-phosphate + D-glyceraldehyde 3-phosphate = D-erythrose 4-phosphate + beta-D-fructose 6-phosphate. The protein operates within carbohydrate degradation; pentose phosphate pathway; D-glyceraldehyde 3-phosphate and beta-D-fructose 6-phosphate from D-ribose 5-phosphate and D-xylulose 5-phosphate (non-oxidative stage): step 2/3. Its function is as follows. Transaldolase is important for the balance of metabolites in the pentose-phosphate pathway. The chain is Transaldolase from Ralstonia nicotianae (strain ATCC BAA-1114 / GMI1000) (Ralstonia solanacearum).